A 390-amino-acid chain; its full sequence is Glutamyl-tRNA reductase (390 aa).

Residues threonine 46 to arginine 49, serine 96, glutamate 101 to glutamine 103, and glutamine 107 each bind substrate. Cysteine 47 (nucleophile) is an active-site residue. Glycine 176 to alanine 181 contributes to the NADP(+) binding site.

The protein belongs to the glutamyl-tRNA reductase family. In terms of assembly, homodimer.

It catalyses the reaction (S)-4-amino-5-oxopentanoate + tRNA(Glu) + NADP(+) = L-glutamyl-tRNA(Glu) + NADPH + H(+). Its pathway is porphyrin-containing compound metabolism; protoporphyrin-IX biosynthesis; 5-aminolevulinate from L-glutamyl-tRNA(Glu): step 1/2. Functionally, catalyzes the NADPH-dependent reduction of glutamyl-tRNA(Glu) to glutamate 1-semialdehyde (GSA). This Thermus thermophilus (strain ATCC BAA-163 / DSM 7039 / HB27) protein is Glutamyl-tRNA reductase.